A 90-amino-acid chain; its full sequence is Phosphoribosyl-ATP pyrophosphatase (90 aa).

Belongs to the PRA-PH family.

The protein localises to the cytoplasm. It catalyses the reaction 1-(5-phospho-beta-D-ribosyl)-ATP + H2O = 1-(5-phospho-beta-D-ribosyl)-5'-AMP + diphosphate + H(+). Its pathway is amino-acid biosynthesis; L-histidine biosynthesis; L-histidine from 5-phospho-alpha-D-ribose 1-diphosphate: step 2/9. In Streptomyces griseus subsp. griseus (strain JCM 4626 / CBS 651.72 / NBRC 13350 / KCC S-0626 / ISP 5235), this protein is Phosphoribosyl-ATP pyrophosphatase.